A 539-amino-acid chain; its full sequence is 2-isopropylmalate synthase (539 aa).

The Pyruvate carboxyltransferase domain maps to Val-8–Pro-269. The Mn(2+) site is built by Asp-17, His-208, His-210, and Asn-244. The tract at residues Gln-408 to Ile-539 is regulatory domain.

Belongs to the alpha-IPM synthase/homocitrate synthase family. LeuA type 1 subfamily. As to quaternary structure, homodimer. It depends on Mn(2+) as a cofactor.

The protein resides in the cytoplasm. The enzyme catalyses 3-methyl-2-oxobutanoate + acetyl-CoA + H2O = (2S)-2-isopropylmalate + CoA + H(+). It participates in amino-acid biosynthesis; L-leucine biosynthesis; L-leucine from 3-methyl-2-oxobutanoate: step 1/4. Catalyzes the condensation of the acetyl group of acetyl-CoA with 3-methyl-2-oxobutanoate (2-ketoisovalerate) to form 3-carboxy-3-hydroxy-4-methylpentanoate (2-isopropylmalate). The sequence is that of 2-isopropylmalate synthase from Prochlorococcus marinus (strain NATL1A).